The chain runs to 183 residues: UPF0397 protein stu0306/stu0307 (183 aa).

A run of 5 helical transmembrane segments spans residues 11-31, 44-64, 74-94, 111-131, and 149-169; these read ATGIGAALFIIICIFVNIPIF, VLFSVIFGSRSIIGFFMGFIG, GDISWAWVLASGITGLVIGLF, IWFNLAQALGLLIAYGVVTPI, and FVAGVANFITIAIGGTLLLAI.

The protein belongs to the UPF0397 family.

Its subcellular location is the cell membrane. This is UPF0397 protein stu0306/stu0307 from Streptococcus thermophilus (strain ATCC BAA-250 / LMG 18311).